Consider the following 96-residue polypeptide: Co-chaperonin GroES (96 aa).

Belongs to the GroES chaperonin family. Heptamer of 7 subunits arranged in a ring. Interacts with the chaperonin GroEL.

Its subcellular location is the cytoplasm. Functionally, together with the chaperonin GroEL, plays an essential role in assisting protein folding. The GroEL-GroES system forms a nano-cage that allows encapsulation of the non-native substrate proteins and provides a physical environment optimized to promote and accelerate protein folding. GroES binds to the apical surface of the GroEL ring, thereby capping the opening of the GroEL channel. This Vibrio campbellii (strain ATCC BAA-1116) protein is Co-chaperonin GroES.